A 96-amino-acid polypeptide reads, in one-letter code: UPF0235 protein CKO_04329 (96 aa).

The protein belongs to the UPF0235 family.

This is UPF0235 protein CKO_04329 from Citrobacter koseri (strain ATCC BAA-895 / CDC 4225-83 / SGSC4696).